Reading from the N-terminus, the 365-residue chain is Green-sensitive opsin P521 (365 aa).

Topologically, residues 1–51 (MTEAWNVAVFAARRSRDDDDTTRGSVFTYTNTNNTRGPFEGPNYHIAPRWV) are extracellular. Asn33 is a glycosylation site (N-linked (GlcNAc...) asparagine). Residues 52–76 (YNLVSFFMIIVVIASCFTNGLVLVA) traverse the membrane as a helical segment. At 77 to 88 (TAKFKKLRHPLN) the chain is on the cytoplasmic side. Residues 89–113 (WILVNLAFVDLVETLVASTISVFNQ) traverse the membrane as a helical segment. At 114 to 128 (IFGYFILGHPLCVIE) the chain is on the extracellular side. An intrachain disulfide couples Cys125 to Cys202. The helical transmembrane segment at 129–148 (GYVVSSCGITGLWSLAIISW) threads the bilayer. The Cytoplasmic segment spans residues 149-167 (ERWFVVCKPFGNIKFDSKL). The chain crosses the membrane as a helical span at residues 168–191 (AIIGIVFSWVWAWGWSAPPIFGWS). Residues 192–217 (RYWPHGLKTSCGPDVFSGSVELGCQS) are Extracellular-facing. The chain crosses the membrane as a helical span at residues 218–245 (FMLTLMITCCFLPLFIIIVCYLQVWMAI). Topologically, residues 246-267 (RAVAAQQKESESTQKAEREVSR) are cytoplasmic. A helical transmembrane segment spans residues 268 to 291 (MVVVMIVAFCICWGPYASFVSFAA). The Extracellular portion of the chain corresponds to 292–299 (ANPGYAFH). Residues 300–324 (PLAAALPAYFAKSATIYNPVIYVFM) traverse the membrane as a helical segment. Lys311 carries the post-translational modification N6-(retinylidene)lysine. Topologically, residues 325 to 365 (NRQFRNCIMQLFGKKVDDGSEASTTSRTEVSSVSNSSVAPA) are cytoplasmic. The interval 342-365 (DGSEASTTSRTEVSSVSNSSVAPA) is disordered. The span at 345–365 (EASTTSRTEVSSVSNSSVAPA) shows a compositional bias: low complexity.

Belongs to the G-protein coupled receptor 1 family. Opsin subfamily. Post-translationally, phosphorylated on some or all of the serine and threonine residues present in the C-terminal region. As to expression, in this lizard the color pigments are found in the rod-shaped photoreceptor cells which have been derived from ancestral cone-like photoreceptors.

It localises to the membrane. Functionally, visual pigments are the light-absorbing molecules that mediate vision. They consist of an apoprotein, opsin, covalently linked to cis-retinal. The protein is Green-sensitive opsin P521 of Gekko gecko (Tokay gecko).